A 690-amino-acid polypeptide reads, in one-letter code: Polyribonucleotide nucleotidyltransferase (690 aa).

Mg(2+) contacts are provided by D482 and D488. One can recognise a KH domain in the interval 549-608 (PRIITIQINPDRIRDVIGPGGKVIRALTEETGATIDIQDNGTVTIASVDGEAGAAAKRRI). One can recognise an S1 motif domain in the interval 618-686 (DTIYDGKVAK…RQGKIKLSMK (69 aa)).

Belongs to the polyribonucleotide nucleotidyltransferase family. In terms of assembly, component of the RNA degradosome, which is a multiprotein complex involved in RNA processing and mRNA degradation. Requires Mg(2+) as cofactor.

Its subcellular location is the cytoplasm. The enzyme catalyses RNA(n+1) + phosphate = RNA(n) + a ribonucleoside 5'-diphosphate. Functionally, involved in mRNA degradation. Catalyzes the phosphorolysis of single-stranded polyribonucleotides processively in the 3'- to 5'-direction. The polypeptide is Polyribonucleotide nucleotidyltransferase (Acidithiobacillus ferrooxidans (strain ATCC 23270 / DSM 14882 / CIP 104768 / NCIMB 8455) (Ferrobacillus ferrooxidans (strain ATCC 23270))).